An 814-amino-acid polypeptide reads, in one-letter code: Cadherin-15 (814 aa).

The first 21 residues, 1–21 (MDAAFLLVLGLLAQSLCLSLG), serve as a signal peptide directing secretion. A propeptide spanning residues 22–60 (VPGWRRPTTLYPWRRAPALSRVRRAWVIPPISVSENHKR) is cleaved from the precursor. Cadherin domains lie at 61–152 (LPYP…RPAF), 153–260 (LQEA…APEF), 261–375 (TRDE…PPVF), 376–481 (QENP…DHAP), and 482–590 (VLAP…VCLP). The Extracellular portion of the chain corresponds to 61-606 (LPYPLVQIKS…AGGTGLSLGA (546 aa)). N227 is a glycosylation site (N-linked (GlcNAc...) asparagine). 3 N-linked (GlcNAc...) asparagine glycosylation sites follow: N531, N538, and N576. A helical transmembrane segment spans residues 607–626 (LVIVLASALLLLVLVLLVAL). Over 627–814 (RARFWKQSRG…LLPRHRGRTA (188 aa)) the chain is Cytoplasmic. 2 disordered regions span residues 636–663 (GKGL…GEED) and 676–703 (TALS…PPRV).

Expressed in the brain and cerebellum.

It localises to the cell membrane. Its function is as follows. Cadherins are calcium-dependent cell adhesion proteins. They preferentially interact with themselves in a homophilic manner in connecting cells; cadherins may thus contribute to the sorting of heterogeneous cell types. M-cadherin is part of the myogenic program and may provide a trigger for terminal muscle differentiation. The sequence is that of Cadherin-15 (CDH15) from Homo sapiens (Human).